The primary structure comprises 77 residues: Coiled-coil-helix-coiled-coil-helix domain-containing protein C550.01c (77 aa).

Positions 24-65 (KGGCVEEHLRLNDCYWDTHDWRKCTEQMEEFRKCWEKRHGPL) constitute a CHCH domain. Short sequence motifs (cx9C motif) lie at residues 27-37 (CVEEHLRLNDC) and 47-57 (CTEQMEEFRKC). Cystine bridges form between Cys-27–Cys-57 and Cys-37–Cys-47.

The protein localises to the cytoplasm. It localises to the nucleus. In Schizosaccharomyces pombe (strain 972 / ATCC 24843) (Fission yeast), this protein is Coiled-coil-helix-coiled-coil-helix domain-containing protein C550.01c.